The following is a 261-amino-acid chain: Kallikrein 1-related peptidase b5 (261 aa).

The N-terminal stretch at 1–18 is a signal peptide; it reads MWFLILFLALSLGGIDAA. A propeptide spans 19–24 (activation peptide); the sequence is PPVQSR. One can recognise a Peptidase S1 domain in the interval 25–258; it reads IFGGFNCEKN…FNSWIKDTIA (234 aa). 5 cysteine pairs are disulfide-bonded: C31–C173, C50–C66, C152–C219, C184–C198, and C209–C234. Catalysis depends on H65, which acts as the Charge relay system. N102 carries N-linked (GlcNAc...) asparagine glycosylation. D120 serves as the catalytic Charge relay system. The active-site Charge relay system is S213.

Belongs to the peptidase S1 family. Kallikrein subfamily.

The enzyme catalyses Preferential cleavage of Arg-|-Xaa bonds in small molecule substrates. Highly selective action to release kallidin (lysyl-bradykinin) from kininogen involves hydrolysis of Met-|-Xaa or Leu-|-Xaa.. Glandular kallikreins cleave Met-Lys and Arg-Ser bonds in kininogen to release Lys-bradykinin. The sequence is that of Kallikrein 1-related peptidase b5 (Klk1b5) from Mus musculus (Mouse).